The following is a 171-amino-acid chain: Lipoprotein signal peptidase (171 aa).

Helical transmembrane passes span 8–28 (SFLW…YIVV), 64–84 (WQQY…VYFL), and 99–119 (ALII…GFVV). Residues Asp120 and Asp138 contribute to the active site. A helical membrane pass occupies residues 133–153 (VFNIADIAICIGAGLLVLDAF).

This sequence belongs to the peptidase A8 family.

It localises to the cell inner membrane. It catalyses the reaction Release of signal peptides from bacterial membrane prolipoproteins. Hydrolyzes -Xaa-Yaa-Zaa-|-(S,diacylglyceryl)Cys-, in which Xaa is hydrophobic (preferably Leu), and Yaa (Ala or Ser) and Zaa (Gly or Ala) have small, neutral side chains.. The protein operates within protein modification; lipoprotein biosynthesis (signal peptide cleavage). Functionally, this protein specifically catalyzes the removal of signal peptides from prolipoproteins. This chain is Lipoprotein signal peptidase, found in Haemophilus influenzae (strain ATCC 51907 / DSM 11121 / KW20 / Rd).